A 265-amino-acid chain; its full sequence is DNA-binding dual transcriptional regulator Rns (265 aa).

Positions 20 and 75 each coordinate decanoate. In terms of domain architecture, HTH araC/xylS-type spans 164-261 (DKVRNLIEKD…GVTPKQFFTY (98 aa)). DNA-binding regions (H-T-H motif) lie at residues 181 to 202 (GIIA…ESEN) and 228 to 251 (ISQI…NKHY).

As to quaternary structure, homodimer; each subunit binds one decanoate molecule.

It is found in the cytoplasm. Its activity is regulated as follows. Rns-dependent expression of pilins and outer membrane proteins CexE-alpha and CexE-epsilon are inhibited in vivo by decanoic acid (decanoate); has no effect on expression of DnaK or flagellins. Decanoate relieves Rns-dependent repression of nlpA. A transcription factor required for the expression of the CS1 and CS2 adhesins of enterotoxigenic E.coli. Required for expression of pilins and some outer membrane lipoproteins. Represses expression of nlpA. The chain is DNA-binding dual transcriptional regulator Rns from Escherichia coli.